The chain runs to 349 residues: Beta-hexosaminidase (349 aa).

Residues aspartate 64, arginine 72, arginine 138, and 168-169 contribute to the substrate site; that span reads KH. Histidine 181 (proton donor/acceptor) is an active-site residue. Residue aspartate 252 is the Nucleophile of the active site.

It belongs to the glycosyl hydrolase 3 family. NagZ subfamily.

Its subcellular location is the cytoplasm. The enzyme catalyses Hydrolysis of terminal non-reducing N-acetyl-D-hexosamine residues in N-acetyl-beta-D-hexosaminides.. The protein operates within cell wall biogenesis; peptidoglycan recycling. Functionally, plays a role in peptidoglycan recycling by cleaving the terminal beta-1,4-linked N-acetylglucosamine (GlcNAc) from peptide-linked peptidoglycan fragments, giving rise to free GlcNAc, anhydro-N-acetylmuramic acid and anhydro-N-acetylmuramic acid-linked peptides. The chain is Beta-hexosaminidase from Nitrosospira multiformis (strain ATCC 25196 / NCIMB 11849 / C 71).